The primary structure comprises 417 residues: NADH-quinone oxidoreductase subunit D (417 aa).

This sequence belongs to the complex I 49 kDa subunit family. In terms of assembly, NDH-1 is composed of 14 different subunits. Subunits NuoB, C, D, E, F, and G constitute the peripheral sector of the complex.

It is found in the cell inner membrane. The catalysed reaction is a quinone + NADH + 5 H(+)(in) = a quinol + NAD(+) + 4 H(+)(out). Its function is as follows. NDH-1 shuttles electrons from NADH, via FMN and iron-sulfur (Fe-S) centers, to quinones in the respiratory chain. The immediate electron acceptor for the enzyme in this species is believed to be ubiquinone. Couples the redox reaction to proton translocation (for every two electrons transferred, four hydrogen ions are translocated across the cytoplasmic membrane), and thus conserves the redox energy in a proton gradient. This is NADH-quinone oxidoreductase subunit D from Nitrosococcus oceani (strain ATCC 19707 / BCRC 17464 / JCM 30415 / NCIMB 11848 / C-107).